The primary structure comprises 698 residues: Polyribonucleotide nucleotidyltransferase (698 aa).

D485 and D491 together coordinate Mg(2+). Positions 552-611 constitute a KH domain; it reads PRITTIKINPEKIRDVIGKGGAVIRALTEETGTTIELDDDGTVKIASSNGEATKEAIRRI. In terms of domain architecture, S1 motif spans 621 to 689; the sequence is GRVYNGKVIR…RQGRVRLSIK (69 aa).

It belongs to the polyribonucleotide nucleotidyltransferase family. In terms of assembly, component of the RNA degradosome, which is a multiprotein complex involved in RNA processing and mRNA degradation. Mg(2+) is required as a cofactor.

It is found in the cytoplasm. It carries out the reaction RNA(n+1) + phosphate = RNA(n) + a ribonucleoside 5'-diphosphate. In terms of biological role, involved in mRNA degradation. Catalyzes the phosphorolysis of single-stranded polyribonucleotides processively in the 3'- to 5'-direction. This Shewanella denitrificans (strain OS217 / ATCC BAA-1090 / DSM 15013) protein is Polyribonucleotide nucleotidyltransferase.